We begin with the raw amino-acid sequence, 206 residues long: UPF0502 protein Acid_1185 (206 aa).

It belongs to the UPF0502 family.

The polypeptide is UPF0502 protein Acid_1185 (Solibacter usitatus (strain Ellin6076)).